A 94-amino-acid chain; its full sequence is Small ribosomal subunit protein bS6 (94 aa).

This sequence belongs to the bacterial ribosomal protein bS6 family.

Functionally, binds together with bS18 to 16S ribosomal RNA. In Clostridium botulinum (strain Loch Maree / Type A3), this protein is Small ribosomal subunit protein bS6.